The following is a 69-amino-acid chain: DNA gyrase inhibitor YacG (69 aa).

Zn(2+)-binding residues include C13, C16, C32, and C36.

Belongs to the DNA gyrase inhibitor YacG family. In terms of assembly, interacts with GyrB. The cofactor is Zn(2+).

Inhibits all the catalytic activities of DNA gyrase by preventing its interaction with DNA. Acts by binding directly to the C-terminal domain of GyrB, which probably disrupts DNA binding by the gyrase. The chain is DNA gyrase inhibitor YacG from Neisseria gonorrhoeae (strain ATCC 700825 / FA 1090).